Consider the following 159-residue polypeptide: Abscisic acid and environmental stress-inducible protein (159 aa).

6 consecutive repeat copies span residues 38 to 49 (GGGYNHGGGGYN), 50 to 61 (GGGYNHGGGGYN), 63 to 74 (GGGYNHGGGGYN), 77 to 88 (GGGYNHGGGGYN), 91 to 102 (GGGYNHGGGGYN), and 105 to 116 (GGGYNHGGGGYN). The interval 38–135 (GGGYNHGGGG…GYNHGGGGCQ (98 aa)) is 7 X 12 AA repeats of G-G-G-Y-N-H-G-G-G-Y-N. A 7; approximate repeat occupies 124–135 (GGGYNHGGGGCQ).

Belongs to the GRP family.

The sequence is that of Abscisic acid and environmental stress-inducible protein from Medicago sativa subsp. falcata (Sickle medic).